Consider the following 427-residue polypeptide: Tol-Pal system protein TolB (427 aa).

An N-terminal signal peptide occupies residues 1–23 (MKLLKRLVSVFAIVLAVGSNAFA).

It belongs to the TolB family. The Tol-Pal system is composed of five core proteins: the inner membrane proteins TolA, TolQ and TolR, the periplasmic protein TolB and the outer membrane protein Pal. They form a network linking the inner and outer membranes and the peptidoglycan layer.

The protein localises to the periplasm. Its function is as follows. Part of the Tol-Pal system, which plays a role in outer membrane invagination during cell division and is important for maintaining outer membrane integrity. This chain is Tol-Pal system protein TolB, found in Haemophilus influenzae (strain ATCC 51907 / DSM 11121 / KW20 / Rd).